The primary structure comprises 123 residues: Small ribosomal subunit protein uS12cz/uS12cy (123 aa).

This sequence belongs to the universal ribosomal protein uS12 family. As to quaternary structure, part of the 30S ribosomal subunit.

The protein resides in the plastid. The protein localises to the chloroplast. Its function is as follows. With S4 and S5 plays an important role in translational accuracy. Located at the interface of the 30S and 50S subunits. This is Small ribosomal subunit protein uS12cz/uS12cy (rps12-A) from Arabis hirsuta (Hairy rock-cress).